The primary structure comprises 209 residues: Regulator of G-protein signaling 1 (209 aa).

The segment at 19-42 is disordered; that stretch reads FSASPKDSKEHSHSLLDDKKQKKR. Residues 24–38 are compositionally biased toward basic and acidic residues; it reads KDSKEHSHSLLDDKK. The 116-residue stretch at 85–200 folds into the RGS domain; the sequence is SLEKLLANQT…LKSNIYLNLL (116 aa).

In terms of assembly, interacts with GNAI1 and GNAQ. Detected in spleen, lymph node and intestine.

The protein resides in the cell membrane. It localises to the cytoplasm. Its subcellular location is the cytosol. In terms of biological role, regulates G protein-coupled receptor signaling cascades, including signaling downstream of the N-formylpeptide chemoattractant receptors and leukotriene receptors. Inhibits B cell chemotaxis toward CXCL12. Inhibits signal transduction by increasing the GTPase activity of G protein alpha subunits thereby driving them into their inactive GDP-bound form. This chain is Regulator of G-protein signaling 1 (Rgs1), found in Mus musculus (Mouse).